The chain runs to 317 residues: METWQEVAVHVHRDAQEAVSHVLIETGSQGVAIADSADYIGQKDRFGELYPDVEQSDMIAITAYYPSSTNLADVIATINEQLAELASFGLQVGQVTVDSQELAEEDWADNWKKYYEPARITHDLTIVPSWTDYDASAGEKVIKLDPGMAFGTGTHPTTKMSLFALEQVLRGGETVIDVGTGSGVLSIASSLLGAKTIYAYDLDDVAVRVAQENIDLNQGTDNIHVAAGDLLKGVSQEADVIVANILADILVLLTDDAYRLVKKEGYLILSGIISEKLDMVLEAAFSAGFFLETHMVQGEWNALVFKKTDDISGVIGG.

Residues Thr158, Gly179, Asp201, and Asn244 each coordinate S-adenosyl-L-methionine.

Belongs to the methyltransferase superfamily. PrmA family.

The protein localises to the cytoplasm. It carries out the reaction L-lysyl-[protein] + 3 S-adenosyl-L-methionine = N(6),N(6),N(6)-trimethyl-L-lysyl-[protein] + 3 S-adenosyl-L-homocysteine + 3 H(+). Functionally, methylates ribosomal protein L11. The polypeptide is Ribosomal protein L11 methyltransferase (Streptococcus pyogenes serotype M49 (strain NZ131)).